Reading from the N-terminus, the 579-residue chain is Multidrug resistance-like ATP-binding protein MdlA (579 aa).

The ABC transmembrane type-1 domain occupies 18 to 303 (YTIAIFLLIS…FAWMFNIIER (286 aa)). 6 helical membrane passes run 20–40 (IAIFLLISISILQLYPPKLIG), 53–73 (KAPILPLILIILFISIIIYIL), 134–154 (GVLTLVDSLIMGVSVIIVMIT), 155–175 (QISWKLTIISLIPMPIMAIII), 247–267 (IIHLFISISHLLAITIGSYMI), and 281–301 (ILYLGLIIWPMLAFAWMFNII). Positions 338 to 572 (VKINYFKYSK…LKQWYGKTYL (235 aa)) constitute an ABC transporter domain. 370 to 377 (GPTGSGKS) provides a ligand contact to ATP.

The protein belongs to the ABC transporter superfamily. Drug exporter-2 (TC 3.A.1.117) family.

It is found in the cell membrane. It catalyses the reaction ATP + H2O + xenobioticSide 1 = ADP + phosphate + xenobioticSide 2.. The protein is Multidrug resistance-like ATP-binding protein MdlA (mdlA) of Buchnera aphidicola subsp. Baizongia pistaciae (strain Bp).